The primary structure comprises 323 residues: Beta-ketoacyl-[acyl-carrier-protein] synthase III (323 aa).

Residues Cys114 and His250 contribute to the active site. An ACP-binding region spans residues Gln251–Arg255. Asn280 is an active-site residue.

This sequence belongs to the thiolase-like superfamily. FabH family. As to quaternary structure, homodimer.

The protein localises to the cytoplasm. It catalyses the reaction malonyl-[ACP] + acetyl-CoA + H(+) = 3-oxobutanoyl-[ACP] + CO2 + CoA. It functions in the pathway lipid metabolism; fatty acid biosynthesis. Its function is as follows. Catalyzes the condensation reaction of fatty acid synthesis by the addition to an acyl acceptor of two carbons from malonyl-ACP. Catalyzes the first condensation reaction which initiates fatty acid synthesis and may therefore play a role in governing the total rate of fatty acid production. Possesses both acetoacetyl-ACP synthase and acetyl transacylase activities. Its substrate specificity determines the biosynthesis of branched-chain and/or straight-chain of fatty acids. The protein is Beta-ketoacyl-[acyl-carrier-protein] synthase III of Ruegeria pomeroyi (strain ATCC 700808 / DSM 15171 / DSS-3) (Silicibacter pomeroyi).